We begin with the raw amino-acid sequence, 317 residues long: MIEIEMEKPKVEVVEINAENTYGKFTVEPLERGYGTTLGNSLRRIMLSSLPGAAVTSVKIDGVLHEFSTIPGVKEDVAEIIINLKGLSIRMHGNEPKTVRIEAKGEGVITAGDIIADADVEILSPDTHIATLDTDAVLNMELTIAKGRGYVPAENNKTPGMPIGVLPIDSIFTPVTKVSYHVENTRVGQVTDYDKLVIEVFTDGSIVPDEAISLAAKIMNEHLNLFITLTDHVNDVEIMVQKEEDKKEKVLEMTIEELDLSVRSYNCLKRAGINTVDELAQKSEEDMMKVRNLGRKSLEEVQKKLEELGLGLRPSDE.

Positions 1 to 230 (MIEIEMEKPK…EHLNLFITLT (230 aa)) are alpha N-terminal domain (alpha-NTD). An alpha C-terminal domain (alpha-CTD) region spans residues 247 to 317 (KEKVLEMTIE…LGLGLRPSDE (71 aa)).

The protein belongs to the RNA polymerase alpha chain family. Homodimer. The RNAP catalytic core consists of 2 alpha, 1 beta, 1 beta' and 1 omega subunit. When a sigma factor is associated with the core the holoenzyme is formed, which can initiate transcription.

It catalyses the reaction RNA(n) + a ribonucleoside 5'-triphosphate = RNA(n+1) + diphosphate. Functionally, DNA-dependent RNA polymerase catalyzes the transcription of DNA into RNA using the four ribonucleoside triphosphates as substrates. The sequence is that of DNA-directed RNA polymerase subunit alpha from Alkaliphilus oremlandii (strain OhILAs) (Clostridium oremlandii (strain OhILAs)).